A 497-amino-acid chain; its full sequence is G protein-coupled receptor gprM (497 aa).

N-linked (GlcNAc...) asparagine glycosylation occurs at Asn-3. Helical transmembrane passes span 66-86 (ISVAILPLCIFLLVSYAVLPV), 98-118 (FTLGICFMEASKIAFIIPLGV), 138-158 (CAFTGSLLLLGGWMVVVWSFL), 179-199 (WGALIFGWVVPAVGLTVMLIL), and 221-241 (YWIPIISFAVAALILQLATMA). Asn-259 is a glycosylation site (N-linked (GlcNAc...) asparagine). Helical transmembrane passes span 293–313 (VTLVLIIIANVIFFSVTFIEL) and 357–377 (LLLAVLVLLSLVGFWNFILFA). Residue Asn-421 is glycosylated (N-linked (GlcNAc...) asparagine). The disordered stretch occupies residues 428–497 (YKSPSPMVRS…APAVYREYDD (70 aa)).

It belongs to the G-protein coupled receptor GPR1/git3 family. Interacts with gpaA.

It localises to the cell membrane. Functionally, g protein-coupled receptor that plays a role in conidiation and regulation of the biosynthesis of secondary metabolites such as dihydroxynaphthalene (DHN)-melanin, via interaction with the G-protein complex alpha subunit gpaA. This is G protein-coupled receptor gprM from Aspergillus fumigatus (strain CBS 144.89 / FGSC A1163 / CEA10) (Neosartorya fumigata).